Reading from the N-terminus, the 59-residue chain is UPF0434 protein COSY_0767 (59 aa).

This sequence belongs to the UPF0434 family.

This is UPF0434 protein COSY_0767 from Vesicomyosocius okutanii subsp. Calyptogena okutanii (strain HA).